The sequence spans 250 residues: Cobalt transport protein CbiM (250 aa).

The first 26 residues, 1–26 (MNKKEKRIVAIAAAFALCFGISPAVN), serve as a signal peptide directing secretion. Transmembrane regions (helical) follow at residues 38-58 (KYCI…YFSI), 68-88 (SITM…LKIP), 102-122 (LGAI…VLIF), 134-154 (TLGA…FGIY), 165-185 (LSGI…VTSI), and 209-229 (FAPT…VIMI).

This sequence belongs to the CbiM family. Forms an energy-coupling factor (ECF) transporter complex composed of an ATP-binding protein (A component, CbiO), a transmembrane protein (T component, CbiQ) and 2 possible substrate-capture proteins (S components, CbiM and CbiN) of unknown stoichimetry.

It is found in the cell membrane. It functions in the pathway cofactor biosynthesis; adenosylcobalamin biosynthesis. Its function is as follows. Part of the energy-coupling factor (ECF) transporter complex CbiMNOQ involved in cobalt import. This Lachnoclostridium phytofermentans (strain ATCC 700394 / DSM 18823 / ISDg) (Clostridium phytofermentans) protein is Cobalt transport protein CbiM.